The chain runs to 725 residues: Eukaryotic translation initiation factor 3 subunit B (725 aa).

The RRM domain occupies 46 to 130 (NCVFIAGIPV…HTFTARSFKD (85 aa)). WD repeat units follow at residues 202-240 (RANW…RAHR), 242-280 (AHTN…SLRI), 354-395 (VNIE…SMQR), 462-504 (PLSE…HAPK), 510-552 (DAGV…AKRT), and 554-594 (VIEH…FTFQ).

Belongs to the eIF-3 subunit B family. In terms of assembly, component of the eukaryotic translation initiation factor 3 (eIF-3) complex.

It is found in the cytoplasm. In terms of biological role, RNA-binding component of the eukaryotic translation initiation factor 3 (eIF-3) complex, which is involved in protein synthesis of a specialized repertoire of mRNAs and, together with other initiation factors, stimulates binding of mRNA and methionyl-tRNAi to the 40S ribosome. The eIF-3 complex specifically targets and initiates translation of a subset of mRNAs involved in cell proliferation. This Caenorhabditis elegans protein is Eukaryotic translation initiation factor 3 subunit B.